A 284-amino-acid polypeptide reads, in one-letter code: Para-Rep C3 (284 aa).

The 96-residue stretch at 3–98 (TVQSTCWVFT…IEGPWEYGKY (96 aa)) folds into the CRESS-DNA virus Rep endonuclease domain. Positions 10-13 (VFTL) match the RCR-1 motif. The a divalent metal cation site is built by E36 and H42. An RCR-2 motif is present at residues 42-44 (HLQ). The short motif at 51-71 (AQQSLGQMKAIIPGAHFEKMR) is the Nuclear localization signal element. Y81 acts as the For DNA cleavage activity in catalysis. An RCR-3 motif is present at residues 81–84 (YAMK). D86 provides a ligand contact to a divalent metal cation. The short motif at 98–104 (YIKKGSH) is the Nuclear localization signal element. Position 174–182 (174–182 (GPKGGEGKS)) interacts with ATP.

The protein belongs to the nanoviridea/circoviridae replication-associated protein family. As to quaternary structure, homooligomer (Potential). Rep binds to repeated DNA motifs (iterons). Mg(2+) serves as cofactor. The cofactor is Mn(2+).

It localises to the host nucleus. The catalysed reaction is ATP + H2O = ADP + phosphate + H(+). In terms of biological role, initiates and terminates the replication only of its own subviral DNA molecule. The closed circular ssDNA genome is first converted to a superhelical dsDNA. Rep binds a specific hairpin at the genome origin of replication. Introduces an endonucleolytic nick within the intergenic region of the genome, thereby initiating the rolling circle replication (RCR). Following cleavage, binds covalently to the 5'-phosphate of DNA as a tyrosyl ester. The cleavage gives rise to a free 3'-OH that serves as a primer for the cellular DNA polymerase. The polymerase synthesizes the (+) strand DNA by rolling circle mechanism. After one round of replication, a Rep-catalyzed nucleotidyl transfer reaction releases a circular single-stranded virus genome, thereby terminating the replication. Displays origin-specific DNA cleavage, nucleotidyl transferase, ATPase and helicase activities. The polypeptide is Para-Rep C3 (C3) (Milk vetch dwarf C3 alphasatellite (MVDC3A)).